An 841-amino-acid polypeptide reads, in one-letter code: Probable outer membrane usher protein EcpC (841 aa).

Positions 1–29 (MPLRRFSPGLKAQFAFGMVFLFVQPDASA) are cleaved as a signal peptide.

Belongs to the EcpC/MatD family.

Part of the ecpRABCDE operon, which encodes the E.coli common pilus (ECP). ECP is found in both commensal and pathogenic strains and plays a dual role in early-stage biofilm development and host cell recognition. This chain is Probable outer membrane usher protein EcpC (ecpC), found in Escherichia coli O6:H1 (strain CFT073 / ATCC 700928 / UPEC).